Here is a 27-residue protein sequence, read N- to C-terminus: AnmTX Sco 9a-1 (27 aa).

Pro-6 is modified (hydroxyproline). 2 disulfide bridges follow: Cys-7-Cys-18 and Cys-10-Cys-25.

Its function is as follows. Has analgesic and anti-inflammatory activity in vivo. At a dose of 0.1 and 1 mg/kg, exhibits anti-inflammatory activity by reducing the volume of edema during 24 h better than the nonsteroidal anti-inflammatory drug, Diclofenac, at dose of 1 mg/kg in a mouse model of acute local lambda-carrageenan-induced inflammation. At a dose of 1 mg/kg, reduces the content of tumor necrosis factor-alpha (TNF-alpha). Demonstrates a significant analgesic effect on acute pain sensitivity in the carrageenan-induced thermal hyperalgesia model at doses of 0.1 and 1 mg/kg. Not toxic in mice, however stimulates exploratory motivation and active search behavior, and demonstrates an anti-anxiety effect. Does not exhibit any effect on currents of rat acid-sensing ion channels ASIC1a or ASIC3. In Stomphia coccinea (Spotted swimming anemone), this protein is AnmTX Sco 9a-1.